We begin with the raw amino-acid sequence, 423 residues long: MKKICLTFVFLLSLFPIYSSQNKQAAGTIESGSSKSSGSSVGNAGPATPEFKSYKEEFSYWYTYYSVYYDVLNALNDDDDNKDKKKNDEDGKTETITSAKKQNGDDVKSDNSKSTAIKKSGGGKTDGEASKKNNSANSWKIILKLLGFNVVDKENGNGKGGSANNGGEGGATSAGSAGATSGAGANGGDAGETEAGEGNGASSDGAGGESGGAGAGAGAGAGAGAGGGAGAGAGAGASAGAGAGGAQGDAEAASAGSTAGSTSSGGAAASGASSGAGSSDSGQGASAGGAAAGASAASAAGGGGAAIGGSASAASGSAASSGSSAGASAAASGSAAGGNKFTKLIKIVQMASMMGGVENLMENPLALQMIMSSSGASAGASAAGSSAAGSSAAGAGGGAGAAGAAGASAXAGAGAGASARAGV.

An N-terminal signal peptide occupies residues 1–20 (MKKICLTFVFLLSLFPIYSS). 4 disordered regions span residues 28 to 47 (TIESGSSKSSGSSVGNAGPA), 78 to 133 (DDDN…SKKN), 159 to 219 (KGGS…GAGA), and 236 to 288 (GASA…ASAG). Residues 31-42 (SGSSKSSGSSVG) are compositionally biased toward low complexity. Composition is skewed to basic and acidic residues over residues 81–93 (NKDKKKNDEDGKT) and 102–111 (QNGDDVKSDN). The segment covering 159 to 172 (KGGSANNGGEGGAT) has biased composition (gly residues). Over residues 173–183 (SAGSAGATSGA) the composition is skewed to low complexity. Composition is skewed to gly residues over residues 205 to 219 (GAGGESGGAGAGAGA) and 236 to 247 (GASAGAGAGGAQ). A compositionally biased stretch (low complexity) spans 248–284 (GDAEAASAGSTAGSTSSGGAAASGASSGAGSSDSGQG).

In terms of tissue distribution, nacreous layer of shell (at protein level).

The protein resides in the secreted. This chain is Glycine-rich protein 1, found in Pinctada maxima (Silver-lipped pearl oyster).